Reading from the N-terminus, the 512-residue chain is PTS system mannitol-specific EIICB component (512 aa).

Topologically, residues 1–28 (MSQTEEKKGIGRRVQAFGSFLSSMIMPN) are cytoplasmic. The region spanning 17-349 (FGSFLSSMIM…MKFTKEPKQD (333 aa)) is the PTS EIIC type-2 domain. A helical transmembrane segment spans residues 29–50 (IGAFIAWGFIAAIFIDNGWFPN). Topologically, residues 51 to 54 (KDLA) are extracellular. Residues 55-75 (TLAGPMITYLIPLLIAFSGGR) form a helical membrane-spanning segment. The Cytoplasmic portion of the chain corresponds to 76 to 139 (LIYDLRGGII…QGFEMLFNNF (64 aa)). The chain crosses the membrane as a helical span at residues 140–161 (SAGILGFIMTIAGFKILAPLMK). The Extracellular portion of the chain corresponds to 162 to 170 (FIMHILSVA). The helical transmembrane segment at 171-191 (VEALVHAHLLPLVSILVEPAK) threads the bilayer. The Cytoplasmic portion of the chain corresponds to 192 to 278 (IVFLNNAINH…VLMRPLLFIA (87 aa)). A helical membrane pass occupies residues 279–298 (VILGGMTGVATYQATGFGFK). The Extracellular segment spans residues 299–318 (SPASPGSFIVYCLNAPRGEF). The helical transmembrane segment at 319 to 340 (LHMLLGVFLATLVSFVVAALIM) threads the bilayer. At 341 to 512 (KFTKEPKQDL…LNNLKKDDQA (172 aa)) the chain is on the cytoplasmic side. Over residues 365 to 376 (SSVASKLVSSDK) the composition is skewed to low complexity. The tract at residues 365-401 (SSVASKLVSSDKNVNTEENASGNVSETSSLDDDPEAL) is disordered. Residues 380 to 392 (TEENASGNVSETS) are compositionally biased toward polar residues. Positions 419–512 (NHVIFACDAG…LNNLKKDDQA (94 aa)) constitute a PTS EIIB type-2 domain. Cys425 acts as the Phosphocysteine intermediate; for EIIB activity in catalysis. Position 425 is a phosphocysteine; by EIIA (Cys425).

In terms of assembly, homodimer.

It localises to the cell membrane. It catalyses the reaction D-mannitol(out) + N(pros)-phospho-L-histidyl-[protein] = D-mannitol 1-phosphate(in) + L-histidyl-[protein]. The phosphoenolpyruvate-dependent sugar phosphotransferase system (sugar PTS), a major carbohydrate active transport system, catalyzes the phosphorylation of incoming sugar substrates concomitantly with their translocation across the cell membrane. The enzyme II CmtAB PTS system is involved in D-mannitol transport. In Staphylococcus aureus (strain MRSA252), this protein is PTS system mannitol-specific EIICB component (mtlA).